Here is a 114-residue protein sequence, read N- to C-terminus: Kita-kyushu lung cancer antigen 1 homolog (114 aa).

Over 1 to 4 (MNVY) the chain is Cytoplasmic. Residues 5–22 (LLLASGILCALMTVFWKY) form a helical; Signal-anchor for type II membrane protein membrane-spanning segment. The Extracellular segment spans residues 23 to 114 (RRFQRNTGEM…RSASAHRKST (92 aa)). The N-linked (GlcNAc...) asparagine glycan is linked to Asn-84.

Its subcellular location is the cell membrane. This is Kita-kyushu lung cancer antigen 1 homolog (CT83) from Macaca fascicularis (Crab-eating macaque).